The primary structure comprises 876 residues: Beta-glucosidase 1 (876 aa).

The first 17 residues, 1–17 (MLMIVQLLVFALGLAVA), serve as a signal peptide directing secretion. N-linked (GlcNAc...) asparagine glycosylation is found at asparagine 22, asparagine 75, asparagine 224, and asparagine 267. Residue aspartate 295 is part of the active site. N-linked (GlcNAc...) asparagine glycans are attached at residues asparagine 332, asparagine 339, asparagine 372, asparagine 389, asparagine 426, asparagine 544, asparagine 585, asparagine 739, asparagine 780, and asparagine 790.

This sequence belongs to the glycosyl hydrolase 3 family.

The catalysed reaction is Hydrolysis of terminal, non-reducing beta-D-glucosyl residues with release of beta-D-glucose.. It participates in glycan metabolism; cellulose degradation. The chain is Beta-glucosidase 1 (BGL1) from Saccharomycopsis fibuligera (Yeast).